The chain runs to 442 residues: Probable glycine dehydrogenase (decarboxylating) subunit 1 (442 aa).

It belongs to the GcvP family. N-terminal subunit subfamily. The glycine cleavage system is composed of four proteins: P, T, L and H. In this organism, the P 'protein' is a heterodimer of two subunits.

It catalyses the reaction N(6)-[(R)-lipoyl]-L-lysyl-[glycine-cleavage complex H protein] + glycine + H(+) = N(6)-[(R)-S(8)-aminomethyldihydrolipoyl]-L-lysyl-[glycine-cleavage complex H protein] + CO2. The glycine cleavage system catalyzes the degradation of glycine. The P protein binds the alpha-amino group of glycine through its pyridoxal phosphate cofactor; CO(2) is released and the remaining methylamine moiety is then transferred to the lipoamide cofactor of the H protein. This Geotalea uraniireducens (strain Rf4) (Geobacter uraniireducens) protein is Probable glycine dehydrogenase (decarboxylating) subunit 1.